We begin with the raw amino-acid sequence, 102 residues long: Peptide chaperone MftB (102 aa).

It belongs to the peptide chaperone MftB family.

Peptide chaperone involved in the biosynthesis of the enzyme cofactor mycofactocin (MFT). Binds MftA and MftC with high affinity, and is essential for MftC activity on MftA, likely via the formation of a ternary complex. Is required for the in vivo ethanol assimilation in M.smegmatis. In Mycolicibacterium smegmatis (strain ATCC 700084 / mc(2)155) (Mycobacterium smegmatis), this protein is Peptide chaperone MftB.